A 336-amino-acid chain; its full sequence is Fructose-1,6-bisphosphatase class 1 (336 aa).

Mg(2+) is bound by residues Glu90, Asp112, Leu114, and Asp115. Substrate is bound by residues 115-118 (DGSS), Asn211, and Lys277. Glu283 provides a ligand contact to Mg(2+).

Belongs to the FBPase class 1 family. In terms of assembly, homotetramer. Requires Mg(2+) as cofactor.

It is found in the cytoplasm. The catalysed reaction is beta-D-fructose 1,6-bisphosphate + H2O = beta-D-fructose 6-phosphate + phosphate. The protein operates within carbohydrate biosynthesis; gluconeogenesis. The sequence is that of Fructose-1,6-bisphosphatase class 1 from Pseudomonas aeruginosa (strain ATCC 15692 / DSM 22644 / CIP 104116 / JCM 14847 / LMG 12228 / 1C / PRS 101 / PAO1).